The sequence spans 493 residues: Glutamate--tRNA ligase (493 aa).

The 'HIGH' region signature appears at 9–19; the sequence is PSPTGFVHIGS. The 'KMSKS' region signature appears at 258 to 262; the sequence is KLSKR. Lysine 261 lines the ATP pocket.

This sequence belongs to the class-I aminoacyl-tRNA synthetase family. Glutamate--tRNA ligase type 1 subfamily. As to quaternary structure, monomer.

It localises to the cytoplasm. It carries out the reaction tRNA(Glu) + L-glutamate + ATP = L-glutamyl-tRNA(Glu) + AMP + diphosphate. Functionally, catalyzes the attachment of glutamate to tRNA(Glu) in a two-step reaction: glutamate is first activated by ATP to form Glu-AMP and then transferred to the acceptor end of tRNA(Glu). This Clostridioides difficile (strain 630) (Peptoclostridium difficile) protein is Glutamate--tRNA ligase.